Consider the following 718-residue polypeptide: MFSVESLERAELCESLLTWIQTFNVDAPCQTVEDLTNGVVMAQVLQKIDPAYFDENWLNRIKTEVGDNWRLKISNLKKILKGILDYNHEILGQQINDFTLPDVNLIGEHSDAAELGRMLQLILGCAVNCEQKQEYIQAIMMMEESVQHVVMTAIQELMSKESPVSAGNDAYVDLDRQLKKTTEELNEALSAKEEIAQRCHELDMQVAALQEEKSSLLAENQVLMERLNQSDSIEDPNSPAGRRHLQLQTQLEQLQEETFRLEAAKDDYRIRCEELEKEISELRQQNDELTTLADEAQSLKDEIDVLRHSSDKVSKLEGQVESYKKKLEDLGDLRRQVKLLEEKNTMYMQNTVSLEEELRKANAARSQLETYKRQVVELQNRLSEESKKADKLDFEYKRLKEKVDSLQKEKDRLRTERDSLKETIEELRCVQAQEGQLTTQGLMPLGSQESSDSLAAEIVTPEIREKLIRLQHENKMLKLNQEGSDNEKIALLQSLLDDANLRKNELETENRLVNQRLLEVQSQVEELQKSLQDQGSKAEDSVLLKKKLEEHLEKLHEANNELQKKRAIIEDLEPRFNNSSLKIEELQEALRKKEEEMKQMEERYKKYLEKAKSVIRTLDPKQNQGAAPEIQALKNQLQERDRLFHSLEKEYEKTKSQREMEEKYIVSAWYNMGMTLHKKAAEDRLASTGSGQSFLARQRQATSSRRSYPGHVQPATAR.

At Met-1 the chain carries N-acetylmethionine. Positions Met-1–Val-164 are sufficient for interaction with microtubules. Phosphoserine occurs at positions 3 and 6. The Calponin-homology (CH) domain maps to Ala-10–Ala-126. Coiled-coil stretches lie at residues Gly-167–Gln-433 and Glu-462–Ser-667. A Phosphoserine modification is found at Ser-238. The required for association with Golgi stretch occupies residues Glu-553–Arg-718. The tract at residues His-556–Arg-718 is required for interaction with MSR1. The tract at residues Glu-682–Arg-718 is disordered. Residues Ser-693 and Ser-707 each carry the phosphoserine modification. The span at Ala-696 to Ser-707 shows a compositional bias: low complexity.

This sequence belongs to the hook family. Self-associates. Component of the FTS/Hook/FHIP complex (FHF complex), composed of AKTIP/FTS, FHIP1B, and one or more members of the Hook family of proteins HOOK1, HOOK2, and HOOK3. May interact directly with AKTIP/FTS, HOOK1 and HOOK2. Associates with several subunits of the homotypic vesicular sorting complex (the HOPS complex) including VPS16 and VPS41; these interactions may be indirect. Interacts with MSR1, and this association is stimulated by ligand binding to MSR1. Interacts with microtubules. Part of a tripartite complex with dynein and dynactin, acts an adapter linking the dynein motor complex and dynactin. Interacts with dynein intermediate chain and dynactin (DCTN1). Interacts with CCDC181. Interacts with LRGUK. As to quaternary structure, (Microbial infection) Interacts with Salmonella typhimurium spiC.

Its subcellular location is the cytoplasm. It localises to the cytoskeleton. The protein resides in the golgi apparatus. Its function is as follows. Acts as an adapter protein linking the dynein motor complex to various cargos and converts dynein from a non-processive to a highly processive motor in the presence of dynactin. Facilitates the interaction between dynein and dynactin and activates dynein processivity (the ability to move along a microtubule for a long distance without falling off the track). Predominantly recruits 2 dyneins, which increases both the force and speed of the microtubule motor. Component of the FTS/Hook/FHIP complex (FHF complex). The FHF complex may function to promote vesicle trafficking and/or fusion via the homotypic vesicular protein sorting complex (the HOPS complex). May regulate clearance of endocytosed receptors such as MSR1. Participates in defining the architecture and localization of the Golgi complex. FHF complex promotes the distribution of AP-4 complex to the perinuclear area of the cell. (Microbial infection) May serve as a target for the spiC protein from Salmonella typhimurium, which inactivates it, leading to a strong alteration in cellular trafficking. The sequence is that of Protein Hook homolog 3 from Homo sapiens (Human).